The primary structure comprises 329 residues: NADH-quinone oxidoreductase subunit H (329 aa).

The next 9 membrane-spanning stretches (helical) occupy residues 9 to 29 (LIKI…ATYI), 42 to 62 (GPSY…IKLF), 75 to 95 (LIFT…MAPI), 117 to 137 (IGFL…ILAG), 154 to 174 (IQLL…LMVV), 188 to 208 (GGFL…FLIA), 238 to 258 (LKWG…SFVI), 269 to 291 (WGFI…LSMW), and 309 to 329 (WKIM…IILI).

The protein belongs to the complex I subunit 1 family. As to quaternary structure, NDH-1 is composed of 14 different subunits. Subunits NuoA, H, J, K, L, M, N constitute the membrane sector of the complex.

It is found in the cell inner membrane. The catalysed reaction is a quinone + NADH + 5 H(+)(in) = a quinol + NAD(+) + 4 H(+)(out). Its function is as follows. NDH-1 shuttles electrons from NADH, via FMN and iron-sulfur (Fe-S) centers, to quinones in the respiratory chain. The immediate electron acceptor for the enzyme in this species is believed to be ubiquinone. Couples the redox reaction to proton translocation (for every two electrons transferred, four hydrogen ions are translocated across the cytoplasmic membrane), and thus conserves the redox energy in a proton gradient. This subunit may bind ubiquinone. In Helicobacter acinonychis (strain Sheeba), this protein is NADH-quinone oxidoreductase subunit H.